Here is a 268-residue protein sequence, read N- to C-terminus: MDNRPIGVMDSGLGGLSVVRVIQQKLPNEEVIFVGDQGHFPYGTKDQAEVRQLALSIGAFLLKHDVKMMVVACNTATAAALPALQAALPIPVIGVIEPGARAALAQDKKGPIGVIATTATTTAGAYPATIERLAPGTPVIAKATQPMVEIVEHGQTGTAKAQEVVSEQLMTFKEHPVKTLIMGCTHFPFLAPEISKAVGPTVALVDPAKETVATAKSWLEQHQAMGNHAHPNYHLYSTGNLPDLRAGVNKWLLSGHFDLGTAQIEEGD.

Residues 10–11 (DS) and 42–43 (YG) each bind substrate. C73 (proton donor/acceptor) is an active-site residue. 74–75 (NT) contributes to the substrate binding site. The Proton donor/acceptor role is filled by C184. 185–186 (TH) contributes to the substrate binding site.

Belongs to the aspartate/glutamate racemases family.

The enzyme catalyses L-glutamate = D-glutamate. The protein operates within cell wall biogenesis; peptidoglycan biosynthesis. Provides the (R)-glutamate required for cell wall biosynthesis. The polypeptide is Glutamate racemase (Limosilactobacillus fermentum (strain NBRC 3956 / LMG 18251) (Lactobacillus fermentum)).